A 196-amino-acid polypeptide reads, in one-letter code: dTTP/UTP pyrophosphatase (196 aa).

Catalysis depends on aspartate 72, which acts as the Proton acceptor.

The protein belongs to the Maf family. YhdE subfamily. A divalent metal cation is required as a cofactor.

It is found in the cytoplasm. It carries out the reaction dTTP + H2O = dTMP + diphosphate + H(+). It catalyses the reaction UTP + H2O = UMP + diphosphate + H(+). Nucleoside triphosphate pyrophosphatase that hydrolyzes dTTP and UTP. May have a dual role in cell division arrest and in preventing the incorporation of modified nucleotides into cellular nucleic acids. In Chlamydia felis (strain Fe/C-56) (Chlamydophila felis), this protein is dTTP/UTP pyrophosphatase.